The sequence spans 501 residues: Myrosinase MA1 (501 aa).

Intrachain disulfides connect Cys-6-Cys-438, Cys-14-Cys-434, and Cys-206-Cys-214. Asn-21 carries an N-linked (GlcNAc...) asparagine glycan. Residue Gln-39 coordinates substrate. His-56 is a Zn(2+) binding site. Asn-60 is a glycosylation site (N-linked (GlcNAc...) asparagine). A Zn(2+)-binding site is contributed by Asp-70. N-linked (GlcNAc...) asparagine glycosylation is present at Asn-90. Substrate-binding residues include His-141 and Asn-186. Residue Gln-187 coordinates L-ascorbate. Residues Asn-218 and Asn-244 are each glycosylated (N-linked (GlcNAc...) asparagine). Residue Arg-259 coordinates L-ascorbate. 2 N-linked (GlcNAc...) asparagine glycosylation sites follow: Asn-265 and Asn-292. A substrate-binding site is contributed by Tyr-330. Residues Asn-343, Asn-346, and Asn-361 are each glycosylated (N-linked (GlcNAc...) asparagine). Residue Glu-409 is the Nucleophile of the active site. Residues Trp-457 and 464–465 contribute to the substrate site; that span reads EF. A glycan (N-linked (GlcNAc...) asparagine) is linked at Asn-482.

The protein belongs to the glycosyl hydrolase 1 family. As to quaternary structure, homodimer. As to expression, in vacuoles called myrosin grains of a certain class of cells, myrosin cells, distributed in the cotyledons and the axis of the embryo as well as in different organs of the growing plant.

Its subcellular location is the vacuole. The catalysed reaction is a thioglucoside + H2O = a sugar + a thiol.. Degradation of glucosinolates (glucose residue linked by a thioglucoside bound to an amino acid derivative) to glucose, sulfate and any of the products: thiocyanates, isothiocyanates, nitriles, epithionitriles or oxazolidine-2-thiones. The protein is Myrosinase MA1 of Sinapis alba (White mustard).